A 678-amino-acid chain; its full sequence is ATP-dependent RNA helicase DHX58 (678 aa).

The region spanning 11–188 (ILPALEGKNI…QGAIDHILQL (178 aa)) is the Helicase ATP-binding domain. Position 24 to 31 (24 to 31 (LPTGAGKT)) interacts with ATP. The DECH box motif lies at 131–134 (DECH). The region spanning 353-514 (MLERILLKQF…KAVAAVQKMD (162 aa)) is the Helicase C-terminal domain. Residues 489–546 (EMKRELTNEALEVLMEKAVAAVQKMDPDEFKAKIRDLQQASLVKRAARAAHREIQQGQ) are a coiled coil. The RLR CTR domain occupies 542-669 (IQQGQFLPEH…PVFDILQDCT (128 aa)). Residues Cys-556, Cys-559, Cys-612, and Cys-615 each contribute to the Zn(2+) site. Residues 572–655 (VEGTHHVNVN…KIQAKKWSRV (84 aa)) are RNA-binding.

It belongs to the helicase family. RLR subfamily. As to quaternary structure, monomer in the absence of dsRNA. Homodimer in the presence of dsRNA. Interacts with RIGI (via CARD domain), MAVS/IPS1 and DDX60. Found in a complex with RIGI and IFIH1/MDA5. Interacts with ANKRD17. Directly interacts with ATG5 and ATG12, either as ATG5 and ATG12 monomers or as ATG12-ATG5 conjugates. In terms of tissue distribution, highly expressed in mammary tissues. Expressed in liver and testis. Expressed at lower level in spleen, embryo, mammary gland and breast tumors.

The protein localises to the cytoplasm. It carries out the reaction ATP + H2O = ADP + phosphate + H(+). Its function is as follows. Acts as a regulator of RIGI and IFIH1/MDA5 mediated antiviral signaling. Cannot initiate antiviral signaling as it lacks the CARD domain required for activating MAVS/IPS1-dependent signaling events. Can have both negative and positive regulatory functions related to RIGI and IFIH1/MDA5 signaling and this role in regulating signaling may be complex and could probably depend on characteristics of the infecting virus or target cells, or both. Its inhibitory action on RIG-I signaling may involve the following mechanisms: competition with RIGI for binding to the viral RNA, binding to RIGI and inhibiting its dimerization and interaction with MAVS/IPS1, competing with IKBKE in its binding to MAVS/IPS1 thereby inhibiting activation of interferon regulatory factor 3 (IRF3). Its positive regulatory role may involve unwinding or stripping nucleoproteins of viral RNA thereby facilitating their recognition by RIGI and IFIH1/MDA5. Involved in the innate immune response to various RNA viruses and some DNA viruses such as poxviruses, and also to the bacterial pathogen Listeria monocytogenes. Can bind both ssRNA and dsRNA, with a higher affinity for dsRNA. Shows a preference to 5'-triphosphorylated RNA, although it can recognize RNA lacking a 5'-triphosphate. This chain is ATP-dependent RNA helicase DHX58, found in Mus musculus (Mouse).